We begin with the raw amino-acid sequence, 173 residues long: Large ribosomal subunit protein uL10 (173 aa).

The protein belongs to the universal ribosomal protein uL10 family. In terms of assembly, part of the ribosomal stalk of the 50S ribosomal subunit. The N-terminus interacts with L11 and the large rRNA to form the base of the stalk. The C-terminus forms an elongated spine to which L12 dimers bind in a sequential fashion forming a multimeric L10(L12)X complex.

Forms part of the ribosomal stalk, playing a central role in the interaction of the ribosome with GTP-bound translation factors. This chain is Large ribosomal subunit protein uL10, found in Chlorobaculum parvum (strain DSM 263 / NCIMB 8327) (Chlorobium vibrioforme subsp. thiosulfatophilum).